Here is a 315-residue protein sequence, read N- to C-terminus: Porphobilinogen deaminase (315 aa).

C245 carries the post-translational modification S-(dipyrrolylmethanemethyl)cysteine.

The protein belongs to the HMBS family. In terms of assembly, monomer. Dipyrromethane serves as cofactor.

It carries out the reaction 4 porphobilinogen + H2O = hydroxymethylbilane + 4 NH4(+). It participates in porphyrin-containing compound metabolism; protoporphyrin-IX biosynthesis; coproporphyrinogen-III from 5-aminolevulinate: step 2/4. It functions in the pathway porphyrin-containing compound metabolism; chlorophyll biosynthesis. Its function is as follows. Tetrapolymerization of the monopyrrole PBG into the hydroxymethylbilane pre-uroporphyrinogen in several discrete steps. This chain is Porphobilinogen deaminase, found in Prochlorococcus marinus (strain NATL2A).